Reading from the N-terminus, the 204-residue chain is MHKGMLVVVSGPSGAGKGTICQEIRKRNPNLFYSISATTREKRVGEIDGVHYYFIDRQQFEKMIANDEFLEWADVYGNYYGTPKKPVFEALARGQDVILEIDIKGARQVKKTYPEGVFVFILPPSISILEERLRKRGTDKEEIIVKRMQMAWEEIANCDWYDYLILNDDLETAVNDLEAVLTAEKLKPKRVNYRVLLEGGVLER.

The Guanylate kinase-like domain maps to 4 to 182 (GMLVVVSGPS…AVNDLEAVLT (179 aa)). An ATP-binding site is contributed by 11 to 18 (GPSGAGKG).

The protein belongs to the guanylate kinase family.

Its subcellular location is the cytoplasm. It carries out the reaction GMP + ATP = GDP + ADP. Essential for recycling GMP and indirectly, cGMP. The chain is Guanylate kinase from Carboxydothermus hydrogenoformans (strain ATCC BAA-161 / DSM 6008 / Z-2901).